Here is a 392-residue protein sequence, read N- to C-terminus: MGLLDGNPANETSLVLLLFADFSSMLGCMAVLIGFWRLKLLRNHVTKVIACFCATSFCKDFPSTILTLTNTAVNGGFPCYLYAIVITYGSFACWLWTLCLAISIYMLIVKREPEPERFEKYYYLLCWGLPLISTIVMLAKNTVQFVGNWCWIGVSFTGYRFGLFYGPFLFIWAISAVLVGLTSRYTYVVIHNGVSDNKEKHLTYQFKLINYIIVFLVCWVFAVVNRIVNGLNMFPPALNILHTYLSVSHGFWASVTFIYNNPLMWRYFGAKILTVFTFFGYFTDVQKKLEKNKNNNNPSPYSSSRGTSGKTMGGHPTGDDVQCSSDMEQCSLERHPNMVNNQQNLNNNYGLQQNYNDEGSSSSSLSSSDEEKQTVEMQNIQISTSTNGQGNN.

Residues 1–13 (MGLLDGNPANETS) are Extracellular-facing. An N-linked (GlcNAc...) asparagine glycan is attached at N10. The helical transmembrane segment at 14 to 33 (LVLLLFADFSSMLGCMAVLI) threads the bilayer. Over 34–47 (GFWRLKLLRNHVTK) the chain is Cytoplasmic. The helical transmembrane segment at 48–68 (VIACFCATSFCKDFPSTILTL) threads the bilayer. Residues 69-83 (TNTAVNGGFPCYLYA) lie on the Extracellular side of the membrane. The chain crosses the membrane as a helical span at residues 84–109 (IVITYGSFACWLWTLCLAISIYMLIV). The Cytoplasmic portion of the chain corresponds to 110-120 (KREPEPERFEK). The helical transmembrane segment at 121 to 139 (YYYLLCWGLPLISTIVMLA) threads the bilayer. The Extracellular segment spans residues 140–162 (KNTVQFVGNWCWIGVSFTGYRFG). Residues 163-181 (LFYGPFLFIWAISAVLVGL) traverse the membrane as a helical segment. The Cytoplasmic portion of the chain corresponds to 182–205 (TSRYTYVVIHNGVSDNKEKHLTYQ). Residues 206–224 (FKLINYIIVFLVCWVFAVV) traverse the membrane as a helical segment. The Extracellular segment spans residues 225 to 235 (NRIVNGLNMFP). Residues 236 to 260 (PALNILHTYLSVSHGFWASVTFIYN) traverse the membrane as a helical segment. The Cytoplasmic segment spans residues 261–392 (NPLMWRYFGA…STSTNGQGNN (132 aa)). Disordered regions lie at residues 292–324 (NKNN…VQCS) and 339–392 (VNNQ…QGNN). Residues 298–310 (PSPYSSSRGTSGK) show a composition bias toward polar residues. Phosphoserine occurs at positions 299, 302, 303, 304, 308, 360, 361, 362, 363, 364, 366, 367, and 368. Positions 340 to 367 (NNQQNLNNNYGLQQNYNDEGSSSSSLSS) are enriched in low complexity. Residues 375 to 392 (VEMQNIQISTSTNGQGNN) are compositionally biased toward polar residues.

Belongs to the G-protein coupled receptor 5 family. C-terminal Ser or Thr residues may be phosphorylated.

The protein localises to the membrane. In terms of biological role, receptor for cAMP. Coordinates the aggregation of individual cells into a multicellular organism and regulates the expression of a large number of developmentally regulated genes. The activity of this receptor is mediated by G proteins. In Dictyostelium discoideum (Social amoeba), this protein is Cyclic AMP receptor 1 (carA-1).